Reading from the N-terminus, the 374-residue chain is Flagellar P-ring protein 1 (374 aa).

A signal peptide spans 1 to 29 (MPGVRWVRIVGVACAALSALALSVTSASA).

Belongs to the FlgI family. As to quaternary structure, the basal body constitutes a major portion of the flagellar organelle and consists of four rings (L,P,S, and M) mounted on a central rod.

The protein resides in the periplasm. It localises to the bacterial flagellum basal body. Functionally, assembles around the rod to form the L-ring and probably protects the motor/basal body from shearing forces during rotation. The polypeptide is Flagellar P-ring protein 1 (Bradyrhizobium diazoefficiens (strain JCM 10833 / BCRC 13528 / IAM 13628 / NBRC 14792 / USDA 110)).